A 154-amino-acid polypeptide reads, in one-letter code: MPKGEGKLIAQNKKAHHDYFIEETYEAGLVLQGTEIKSIRAGKVNLKDSFAKVEKGEVFLHNMHISPYEQGNRYNHDPLRTRKLLLHRREISKLIGYTKEQGYTLVPLKLYIKNGFAKLLLGVGKGKKKYDKREDMKKKEAQREVERAFRERQK.

The tract at residues 126-154 (GKKKYDKREDMKKKEAQREVERAFRERQK) is disordered. A compositionally biased stretch (basic and acidic residues) spans 131-154 (DKREDMKKKEAQREVERAFRERQK).

It belongs to the SmpB family.

It is found in the cytoplasm. Required for rescue of stalled ribosomes mediated by trans-translation. Binds to transfer-messenger RNA (tmRNA), required for stable association of tmRNA with ribosomes. tmRNA and SmpB together mimic tRNA shape, replacing the anticodon stem-loop with SmpB. tmRNA is encoded by the ssrA gene; the 2 termini fold to resemble tRNA(Ala) and it encodes a 'tag peptide', a short internal open reading frame. During trans-translation Ala-aminoacylated tmRNA acts like a tRNA, entering the A-site of stalled ribosomes, displacing the stalled mRNA. The ribosome then switches to translate the ORF on the tmRNA; the nascent peptide is terminated with the 'tag peptide' encoded by the tmRNA and targeted for degradation. The ribosome is freed to recommence translation, which seems to be the essential function of trans-translation. This chain is SsrA-binding protein, found in Anoxybacillus flavithermus (strain DSM 21510 / WK1).